Here is an 819-residue protein sequence, read N- to C-terminus: Leucine--tRNA ligase (819 aa).

A 'HIGH' region motif is present at residues proline 42–histidine 52. Positions lysine 577–serine 581 match the 'KMSKS' region motif. ATP is bound at residue lysine 580.

The protein belongs to the class-I aminoacyl-tRNA synthetase family.

Its subcellular location is the cytoplasm. The catalysed reaction is tRNA(Leu) + L-leucine + ATP = L-leucyl-tRNA(Leu) + AMP + diphosphate. This chain is Leucine--tRNA ligase, found in Saccharophagus degradans (strain 2-40 / ATCC 43961 / DSM 17024).